The chain runs to 422 residues: G2/mitotic-specific cyclin-A (422 aa).

Residues 1 to 29 (MSQPFALHHDGENQMQRRGKMNTRSNGLS) are disordered.

This sequence belongs to the cyclin family. Cyclin AB subfamily.

In terms of biological role, essential for the control of the cell cycle at the G2/M (mitosis) transition. Interacts with the CDC2 and CDK2 protein kinases to form MPF. G2/M cyclins accumulate steadily during G2 and are abruptly destroyed at mitosis. The protein is G2/mitotic-specific cyclin-A of Spisula solidissima (Atlantic surf-clam).